Reading from the N-terminus, the 303-residue chain is D-alanine--D-alanine ligase (303 aa).

The region spanning 99-293 is the ATP-grasp domain; it reads TYRFLKDIVE…FEELVEIILK (195 aa). An ATP-binding site is contributed by 125-176; that stretch reads GYPCVVKPRREGSSIGVFICESDEEFQHALKEDLPRYGSVIVQKYIPGREMT. Mg(2+) contacts are provided by Asp-248, Glu-260, and Asn-262.

This sequence belongs to the D-alanine--D-alanine ligase family. Mg(2+) is required as a cofactor. It depends on Mn(2+) as a cofactor.

It localises to the cytoplasm. It catalyses the reaction 2 D-alanine + ATP = D-alanyl-D-alanine + ADP + phosphate + H(+). It participates in cell wall biogenesis; peptidoglycan biosynthesis. Its function is as follows. Cell wall formation. The polypeptide is D-alanine--D-alanine ligase (Thermotoga petrophila (strain ATCC BAA-488 / DSM 13995 / JCM 10881 / RKU-1)).